Reading from the N-terminus, the 69-residue chain is Pleurain-A3 (69 aa).

An N-terminal signal peptide occupies residues methionine 1–cysteine 22. Positions lysine 23–arginine 43 are excised as a propeptide. Cysteines 63 and 69 form a disulfide.

This sequence belongs to the frog skin active peptide (FSAP) family. Pleurain subfamily. In terms of tissue distribution, expressed by the skin glands.

Its subcellular location is the secreted. Functionally, antimicrobial peptide. Has activity against Gram-positive and -negative bacteria, and fungi. Has little hemolytic activity on red blood cells. The sequence is that of Pleurain-A3 from Nidirana pleuraden (Yunnan pond frog).